A 131-amino-acid chain; its full sequence is Biogenesis of lysosome-related organelles complex 1 subunit CNL1 (131 aa).

Positions 1 to 29 (MSAPDSNSGHAHDSAQNEGAAEGTRDPFG) are disordered. Residues 73–101 (DAIDINIEEMRRILQKCEELETHFDMLDQ) adopt a coiled-coil conformation.

Belongs to the BLOC1S4 family. As to quaternary structure, component of the biogenesis of lysosome-related organelles complex-1 (BLOC-1).

It is found in the cytoplasm. In terms of biological role, component of the biogenesis of lysosome-related organelles complex-1 (BLOC-1), a complex that is involved in endosomal cargo sorting. This chain is Biogenesis of lysosome-related organelles complex 1 subunit CNL1 (CLN1), found in Lachancea thermotolerans (strain ATCC 56472 / CBS 6340 / NRRL Y-8284) (Yeast).